A 200-amino-acid polypeptide reads, in one-letter code: NAD(P)H dehydrogenase (quinone) (200 aa).

The region spanning 4–191 is the Flavodoxin-like domain; it reads LLVLYYSMYG…TIARFQGEHV (188 aa). FMN-binding positions include 10–15 and 79–81; these read SMYGHV and TRF. NAD(+) is bound at residue Tyr12. Trp99 serves as a coordination point for substrate. FMN is bound by residues 114–120 and His135; that span reads STASQHG.

The protein belongs to the WrbA family. FMN serves as cofactor.

The catalysed reaction is a quinone + NADH + H(+) = a quinol + NAD(+). It carries out the reaction a quinone + NADPH + H(+) = a quinol + NADP(+). This is NAD(P)H dehydrogenase (quinone) from Nitrosococcus oceani (strain ATCC 19707 / BCRC 17464 / JCM 30415 / NCIMB 11848 / C-107).